We begin with the raw amino-acid sequence, 457 residues long: Serine/threonine-protein phosphatase 2A activator 2 (457 aa).

Disordered regions lie at residues 387-407 (DAHG…GEGQ) and 426-457 (AEQE…IPFD). A compositionally biased stretch (basic residues) spans 391-400 (HIHPAGKPHA).

Belongs to the PTPA-type PPIase family.

The protein resides in the cytoplasm. It carries out the reaction [protein]-peptidylproline (omega=180) = [protein]-peptidylproline (omega=0). Functionally, PPIases accelerate the folding of proteins. It catalyzes the cis-trans isomerization of proline imidic peptide bonds in oligopeptides. Acts as a regulatory subunit for PP2A-like phosphatases modulating their activity or substrate specificity, probably by inducing a conformational change in the catalytic subunit, a direct target of the PPIase. Can reactivate inactive phosphatase PP2A-phosphatase methylesterase complexes (PP2Ai) in presence of ATP and Mg(2+) by dissociating the inactive form from the complex. The polypeptide is Serine/threonine-protein phosphatase 2A activator 2 (RRD2) (Mycosarcoma maydis (Corn smut fungus)).